The chain runs to 549 residues: Oxygen-dependent choline dehydrogenase (549 aa).

An FAD-binding site is contributed by 4 to 33; that stretch reads DFVIIGSGSAGSAMAYRLSEDGRYSVIVIE. The active-site Proton acceptor is histidine 465.

This sequence belongs to the GMC oxidoreductase family. FAD is required as a cofactor.

The enzyme catalyses choline + A = betaine aldehyde + AH2. The catalysed reaction is betaine aldehyde + NAD(+) + H2O = glycine betaine + NADH + 2 H(+). It functions in the pathway amine and polyamine biosynthesis; betaine biosynthesis via choline pathway; betaine aldehyde from choline (cytochrome c reductase route): step 1/1. In terms of biological role, involved in the biosynthesis of the osmoprotectant glycine betaine. Catalyzes the oxidation of choline to betaine aldehyde and betaine aldehyde to glycine betaine at the same rate. The sequence is that of Oxygen-dependent choline dehydrogenase from Brucella canis (strain ATCC 23365 / NCTC 10854 / RM-666).